Here is a 310-residue protein sequence, read N- to C-terminus: Tyrosine recombinase XerC (310 aa).

In terms of domain architecture, Core-binding (CB) spans 11-97 (NSLQKPLSRF…SLRSFFDFLV (87 aa)). The Tyr recombinase domain occupies 118-298 (PLPKNLDVDE…DFQHLAQAYD (181 aa)). Residues Arg-157, Lys-181, His-250, Arg-253, and His-276 contribute to the active site. Tyr-285 acts as the O-(3'-phospho-DNA)-tyrosine intermediate in catalysis.

This sequence belongs to the 'phage' integrase family. XerC subfamily. Forms a cyclic heterotetrameric complex composed of two molecules of XerC and two molecules of XerD.

The protein resides in the cytoplasm. In terms of biological role, site-specific tyrosine recombinase, which acts by catalyzing the cutting and rejoining of the recombining DNA molecules. The XerC-XerD complex is essential to convert dimers of the bacterial chromosome into monomers to permit their segregation at cell division. It also contributes to the segregational stability of plasmids. The polypeptide is Tyrosine recombinase XerC (Vibrio atlanticus (strain LGP32) (Vibrio splendidus (strain Mel32))).